The chain runs to 182 residues: Isopentenyl-diphosphate Delta-isomerase (182 aa).

Positions 25 and 32 each coordinate Mn(2+). Positions 30 to 164 (PLHLAFSCWL…PWAFSPWMVM (135 aa)) constitute a Nudix hydrolase domain. Cys-67 is a catalytic residue. Mn(2+) is bound at residue His-69. Glu-87 serves as a coordination point for Mg(2+). 2 residues coordinate Mn(2+): Glu-114 and Glu-116. Residue Glu-116 is part of the active site.

The protein belongs to the IPP isomerase type 1 family. Homodimer. The cofactor is Mg(2+). Mn(2+) is required as a cofactor.

It localises to the cytoplasm. It catalyses the reaction isopentenyl diphosphate = dimethylallyl diphosphate. Its pathway is isoprenoid biosynthesis; dimethylallyl diphosphate biosynthesis; dimethylallyl diphosphate from isopentenyl diphosphate: step 1/1. Catalyzes the 1,3-allylic rearrangement of the homoallylic substrate isopentenyl (IPP) to its highly electrophilic allylic isomer, dimethylallyl diphosphate (DMAPP). The chain is Isopentenyl-diphosphate Delta-isomerase from Salmonella arizonae (strain ATCC BAA-731 / CDC346-86 / RSK2980).